Consider the following 218-residue polypeptide: Twisted gastrulation protein homolog 1-B (218 aa).

An N-terminal signal peptide occupies residues 1–25 (MKPSFLHIPAAALLLCSLWILPIHC). N-linked (GlcNAc...) asparagine glycans are attached at residues Asn52, Asn81, and Asn147.

It belongs to the twisted gastrulation protein family. In terms of assembly, binds directly to bmp2, bmp4 and bmp7 and can form a ternary complex with bmps and chordin, thus preventing the binding of bmps to their cell surface receptors.

It localises to the secreted. Functionally, involved in dorsal-ventral patterning, permitting peak BMP signaling by antagonizing the residual anti-BMP activity of the cleavage products of chrd. Functions to promote the formation of ventral mesoderm by increasing the activity of bmp7 and other BMPS. Seems to antagonize BMP signaling by forming ternary complexes with chrd and BMPs, thereby preventing BMPs from binding to their receptors. In addition to the anti-BMP function, also has pro-BMP activity, partly mediated by cleavage and degradation of chrd, which releases BMPs from ternary complexes. May be an important modulator of BMP-regulated cartilage development and chondrocyte differentiation. The sequence is that of Twisted gastrulation protein homolog 1-B (twsg1-b) from Xenopus laevis (African clawed frog).